The chain runs to 254 residues: Small ribosomal subunit protein uS2 (254 aa).

This sequence belongs to the universal ribosomal protein uS2 family.

The polypeptide is Small ribosomal subunit protein uS2 (Borrelia hermsii (strain HS1 / DAH)).